The primary structure comprises 538 residues: MFS-type transporter tndD (538 aa).

Residues 1-42 (MSLSGSDSHLAVSPTLAEDMNSSDTSAGLAETPPADEEKRSI) are disordered. 2 N-linked (GlcNAc...) asparagine glycosylation sites follow: Asn-21 and Asn-71. 11 helical membrane passes run 81-101 (VGIV…FAPG), 115-135 (LLAG…PLIL), 153-173 (ICFT…MLIA), 203-223 (GGVI…GPVA), 235-255 (WVFW…FLFL), 309-329 (PIVA…YLMF), 348-368 (GLTF…IGAV), 394-414 (LPPL…YGWS), 422-442 (IVPI…FMCI), 444-464 (SYLV…NTVV), and 485-505 (LGWG…IPWA).

The protein belongs to the major facilitator superfamily.

It localises to the membrane. Its function is as follows. MFS-type transporter; part of the gene cluster that mediates the biosynthesis of talaronoid C, a fusicoccane diterpenoid with an unprecedented tricyclic 5/8/6 ring system. This is MFS-type transporter tndD from Aspergillus flavipes.